The primary structure comprises 202 residues: Putative pre-16S rRNA nuclease (202 aa).

Disordered regions lie at residues methionine 1–isoleucine 27 and glycine 170–arginine 202. Positions glycine 9 to aspartate 20 are enriched in basic and acidic residues.

It belongs to the YqgF nuclease family.

The protein localises to the cytoplasm. Functionally, could be a nuclease involved in processing of the 5'-end of pre-16S rRNA. This Frankia casuarinae (strain DSM 45818 / CECT 9043 / HFP020203 / CcI3) protein is Putative pre-16S rRNA nuclease.